We begin with the raw amino-acid sequence, 92 residues long: Small ribosomal subunit protein uS19c (92 aa).

This sequence belongs to the universal ribosomal protein uS19 family.

Its subcellular location is the plastid. It is found in the chloroplast. Its function is as follows. Protein S19 forms a complex with S13 that binds strongly to the 16S ribosomal RNA. In Pisum sativum (Garden pea), this protein is Small ribosomal subunit protein uS19c (rps19).